The chain runs to 78 residues: DNA-directed RNA polymerase subunit Rpo5 (78 aa).

The protein belongs to the archaeal Rpo5/eukaryotic RPB5 RNA polymerase subunit family. In terms of assembly, part of the RNA polymerase complex.

The protein resides in the cytoplasm. It catalyses the reaction RNA(n) + a ribonucleoside 5'-triphosphate = RNA(n+1) + diphosphate. DNA-dependent RNA polymerase (RNAP) catalyzes the transcription of DNA into RNA using the four ribonucleoside triphosphates as substrates. The protein is DNA-directed RNA polymerase subunit Rpo5 of Methanosarcina acetivorans (strain ATCC 35395 / DSM 2834 / JCM 12185 / C2A).